The primary structure comprises 255 residues: Biotin carboxyl carrier protein of acetyl-CoA carboxylase 2, chloroplastic (255 aa).

The transit peptide at 1 to 87 (MASLSVPCVK…TNVPEPAELS (87 aa)) directs the protein to the chloroplast. Residues 148-193 (PPAQPVALPPSPTPTSTPATAKPTSAPSSSHPPLKSPMAGTFYRSP) are disordered. Residues 149-162 (PAQPVALPPSPTPT) show a composition bias toward pro residues. Positions 163–180 (STPATAKPTSAPSSSHPP) are enriched in low complexity. The Biotinyl-binding domain maps to 178–254 (HPPLKSPMAG…SVDTPLFVIA (77 aa)). Lysine 220 carries the N6-biotinyllysine modification.

Acetyl-CoA carboxylase is a heterohexamer composed of biotin carboxyl carrier protein, biotin carboxylase and 2 subunits each of ACCase subunit alpha and ACCase plastid-coded subunit beta (accD). As to expression, primarily expressed in 7 to 10 days after flowering seeds at levels approximately 2-fold less abundant than BCCP1.

The protein localises to the plastid. The protein resides in the chloroplast. It functions in the pathway lipid metabolism; fatty acid biosynthesis. Its function is as follows. This protein is a component of the acetyl coenzyme A carboxylase complex; first, biotin carboxylase catalyzes the carboxylation of the carrier protein and then the transcarboxylase transfers the carboxyl group to form malonyl-CoA. The polypeptide is Biotin carboxyl carrier protein of acetyl-CoA carboxylase 2, chloroplastic (BCCP2) (Arabidopsis thaliana (Mouse-ear cress)).